We begin with the raw amino-acid sequence, 191 residues long: Hypoxanthine/guanine phosphoribosyltransferase (191 aa).

Belongs to the purine/pyrimidine phosphoribosyltransferase family. Archaeal HPRT subfamily. Homodimer.

The protein resides in the cytoplasm. The enzyme catalyses IMP + diphosphate = hypoxanthine + 5-phospho-alpha-D-ribose 1-diphosphate. It carries out the reaction GMP + diphosphate = guanine + 5-phospho-alpha-D-ribose 1-diphosphate. It functions in the pathway purine metabolism; IMP biosynthesis via salvage pathway; IMP from hypoxanthine: step 1/1. Functionally, catalyzes a salvage reaction resulting in the formation of IMP that is energically less costly than de novo synthesis. This chain is Hypoxanthine/guanine phosphoribosyltransferase, found in Methanocella arvoryzae (strain DSM 22066 / NBRC 105507 / MRE50).